A 253-amino-acid polypeptide reads, in one-letter code: Triosephosphate isomerase (253 aa).

9–11 is a substrate binding site; the sequence is NWK. The active-site Electrophile is His96. Glu169 acts as the Proton acceptor in catalysis. Substrate contacts are provided by residues Gly175, Ser215, and 236–237; that span reads GG.

It belongs to the triosephosphate isomerase family. Homodimer.

It localises to the cytoplasm. It catalyses the reaction D-glyceraldehyde 3-phosphate = dihydroxyacetone phosphate. The protein operates within carbohydrate biosynthesis; gluconeogenesis. Its pathway is carbohydrate degradation; glycolysis; D-glyceraldehyde 3-phosphate from glycerone phosphate: step 1/1. In terms of biological role, involved in the gluconeogenesis. Catalyzes stereospecifically the conversion of dihydroxyacetone phosphate (DHAP) to D-glyceraldehyde-3-phosphate (G3P). The sequence is that of Triosephosphate isomerase from Borreliella burgdorferi (strain ZS7) (Borrelia burgdorferi).